The chain runs to 212 residues: Peroxisomal membrane protein 4 (212 aa).

The next 2 membrane-spanning stretches (helical) occupy residues 97 to 117 (GKTY…LVFG) and 153 to 173 (LDPF…LFEY). Residue Asn206 is glycosylated (N-linked (GlcNAc...) asparagine).

Belongs to the peroxisomal membrane protein PXMP2/4 family. As to quaternary structure, interacts with PEX19.

The protein resides in the peroxisome membrane. This is Peroxisomal membrane protein 4 (PXMP4) from Bos taurus (Bovine).